A 75-amino-acid chain; its full sequence is Putative membrane protein insertion efficiency factor (75 aa).

Belongs to the UPF0161 family.

The protein resides in the cell membrane. Its function is as follows. Could be involved in insertion of integral membrane proteins into the membrane. In Bacillus cytotoxicus (strain DSM 22905 / CIP 110041 / 391-98 / NVH 391-98), this protein is Putative membrane protein insertion efficiency factor.